Reading from the N-terminus, the 391-residue chain is Probable sugar efflux transporter (391 aa).

12 consecutive transmembrane segments (helical) span residues 16 to 36 (VFVF…PIAL), 51 to 71 (VGLM…PLML), 82 to 102 (LLFL…AWDF), 103 to 123 (WVLL…WSIT), 138 to 158 (QALG…LPLG), 170 to 190 (TFGM…RLLP), 210 to 230 (PLLV…FTTY), 247 to 267 (VATL…FLFG), 277 to 297 (FIAC…SFKH), 300 to 320 (WVIF…GISL), 338 to 358 (IFSG…SIVI), and 361 to 381 (LGLG…LFWF).

Belongs to the major facilitator superfamily. SotB (TC 2.A.1.2) family.

Its subcellular location is the cell inner membrane. Functionally, involved in the efflux of sugars. The physiological role may be the reduction of the intracellular concentration of toxic sugars or sugar metabolites. The sequence is that of Probable sugar efflux transporter from Helicobacter acinonychis (strain Sheeba).